The chain runs to 233 residues: MPKHGKRYRALIEKVDRNRQYSIDEAAALVKDLATAKFDETVEVHFRLGIDPRKSDQNVRGTVALPHGTGKTVRVAVITKGDNVAAAEAAGADVVGGEDLIDRIANGFMDFDAVVATPDMMAQIGQKLARLLGPRGLLPNPKSGTVGPDVAGMVRGLKAGRIEFRNDKTGVVHAPIGKASFDPSNLSANYRALLSALEAAKPAAAKGVYLRSAYLTSTMGPSIPLTLSAQAQA.

Belongs to the universal ribosomal protein uL1 family. In terms of assembly, part of the 50S ribosomal subunit.

In terms of biological role, binds directly to 23S rRNA. The L1 stalk is quite mobile in the ribosome, and is involved in E site tRNA release. Protein L1 is also a translational repressor protein, it controls the translation of the L11 operon by binding to its mRNA. The protein is Large ribosomal subunit protein uL1 of Deinococcus geothermalis (strain DSM 11300 / CIP 105573 / AG-3a).